The sequence spans 1021 residues: SWI/SNF-related matrix-associated actin-dependent regulator of chromatin subfamily A containing DEAD/H box 1 (1021 aa).

Met-1 carries the post-translational modification N-acetylmethionine. Disordered regions lie at residues 1–82 (MNLF…SLSC) and 124–151 (SEPSEDEESHDLPSVTRRNDSSELEDLS). The span at 7–19 (DRFRFEKRSKIEE) shows a compositional bias: basic and acidic residues. Residues 22–39 (EAAPQPSQARPSSPISLS) show a composition bias toward low complexity. Phosphothreonine is present on Thr-54. The residue at position 57 (Ser-57) is a Phosphoserine. A Glycyl lysine isopeptide (Lys-Gly) (interchain with G-Cter in SUMO2) cross-link involves residue Lys-77. A phosphoserine mark is found at Ser-79, Ser-124, Ser-127, Ser-132, Ser-144, Ser-145, and Ser-151. The CUE 1 domain maps to 156-198 (LKDAKLQTLKELFPQRSDSDLLKLIESTSTMDGAIAAALLMFG). Residues 201–246 (GGGPRKRKLSSSSEEDDVNDDQSVKQPRGDRGEESNESAEASSNWE) form a disordered region. 4 positions are modified to phosphoserine: Ser-210, Ser-213, Ser-235, and Ser-238. The 44-residue stretch at 247-290 (KQESIVLKLQKEFPNFDKQELREVLKEHEWMYTEALESLKVFAE) folds into the CUE 2 domain. Ser-298 is subject to Phosphoserine. The tract at residues 329 to 366 (VKPQNGFNKKRKKNVFNPKKAVEDSEYDSGSDAGSSLD) is disordered. Residues Lys-330 and Lys-466 each participate in a glycyl lysine isopeptide (Lys-Gly) (interchain with G-Cter in SUMO2) cross-link. Residues 504–672 (ALVHKHGLNG…MSLLNFVMPH (169 aa)) enclose the Helicase ATP-binding domain. 516–524 (ADEMGLGKT) serves as a coordination point for ATP. The DEGH box motif lies at 623–626 (DEGH). The Nuclear localization signal signature appears at 716–733 (RRVKEEVLKLLPPKKDRI). A Glycyl lysine isopeptide (Lys-Gly) (interchain with G-Cter in SUMO2) cross-link involves residue Lys-719. Residues 853 to 1005 (ALGCILSELK…MTTVDEADEG (153 aa)) enclose the Helicase C-terminal domain. 892-899 (YLRLDGKT) provides a ligand contact to ATP. Residue Lys-991 forms a Glycyl lysine isopeptide (Lys-Gly) (interchain with G-Cter in SUMO2) linkage. A DEAD box motif is present at residues 1000–1003 (DEAD).

This sequence belongs to the SNF2/RAD54 helicase family. In terms of assembly, binds to DNA preferentially in the vicinity of transcriptional start sites. Interacts with MSH2 and TRIM28. Part of a complex composed of TRIM28, HDAC1, HDAC2 and EHMT2. Interacts with PCNA.

The protein localises to the nucleus. Its subcellular location is the chromosome. It carries out the reaction ATP + H2O = ADP + phosphate + H(+). DNA helicase that possesses intrinsic ATP-dependent nucleosome-remodeling activity and is both required for DNA repair and heterochromatin organization. Promotes DNA end resection of double-strand breaks (DSBs) following DNA damage: probably acts by weakening histone DNA interactions in nucleosomes flanking DSBs. Required for the restoration of heterochromatin organization after replication. Acts at replication sites to facilitate the maintenance of heterochromatin by directing H3 and H4 histones deacetylation, H3 'Lys-9' trimethylation (H3K9me3) and restoration of silencing. This Mus musculus (Mouse) protein is SWI/SNF-related matrix-associated actin-dependent regulator of chromatin subfamily A containing DEAD/H box 1 (Smarcad1).